The primary structure comprises 182 residues: Lipid A acyltransferase PagP (182 aa).

The first 21 residues, 1-21 (MTQYFRALAFFLLLVPATAMA), serve as a signal peptide directing secretion. The N-palmitoyl cysteine moiety is linked to residue Cys-22. Cys-22 carries the S-diacylglycerol cysteine lipid modification. Active-site residues include His-55, Asp-98, and Ser-99.

This sequence belongs to the lipid A palmitoyltransferase family. In terms of assembly, homodimer.

Its subcellular location is the cell outer membrane. It carries out the reaction a lipid A + a 1,2-diacyl-sn-glycero-3-phosphocholine = a hepta-acyl lipid A + a 2-acyl-sn-glycero-3-phosphocholine. The catalysed reaction is a lipid IVA + a 1,2-diacyl-sn-glycero-3-phosphocholine = a lipid IVB + a 2-acyl-sn-glycero-3-phosphocholine. The enzyme catalyses a lipid IIA + a 1,2-diacyl-sn-glycero-3-phosphocholine = a lipid IIB + a 2-acyl-sn-glycero-3-phosphocholine. In terms of biological role, transfers a fatty acid residue from the sn-1 position of a phospholipid to the N-linked hydroxyfatty acid chain on the proximal unit of lipid A or its precursors. The protein is Lipid A acyltransferase PagP of Bordetella parapertussis (strain 12822 / ATCC BAA-587 / NCTC 13253).